A 698-amino-acid polypeptide reads, in one-letter code: Transcription factor cwo (698 aa).

Residues 62–75 (QDPLSHRIIEKRRR) are basic motif; degenerate. Residues 62–117 (QDPLSHRIIEKRRRDRMNSCLADLSRLIPPQYQRKGRGRIEKTEIIEMAIRHLKHL) enclose the bHLH domain. The tract at residues 76 to 117 (DRMNSCLADLSRLIPPQYQRKGRGRIEKTEIIEMAIRHLKHL) is helix-loop-helix motif. An Orange domain is found at 128-159 (YRSGYMDCMKEAAKFLYDVHMQDFCHRLLGRL). Disordered regions lie at residues 257–319 (SSPA…ASST) and 349–369 (STAPHHHHHHTDSSHHDFESS). Residues 280–318 (APPAADNVPSNSTGSGSAAACAGGNSNSSGSNSSNAASS) show a composition bias toward low complexity. The span at 359–369 (TDSSHHDFESS) shows a compositional bias: basic and acidic residues.

In terms of tissue distribution, expressed in adult brain where it is detected in the dorsal lateral neurons, small and large ventral lateral neurons and dorsal neurons 1, 2 and 3 (at protein level). Expressed at constant levels in a 12 hour light / 12 hour day cycle (at protein level). Strongly expressed in pacemaker neurons. In adults, mRNA expression oscillates in a circadian manner with a peak at around 14 hour Zeitgeber time. mRNA levels oscillate in a rhythmic manner in both 12 hour light / 12 hour dark and constant dark conditions with a morning peak around the time of lights-on and an evening peak around the time of lights-off in light/dark conditions. During stage 8 of embryonic development, expressed in the anterior and posterior midgut primordia and expression in the gut continues throughout embryonic development. During germ band retraction, expression is initiated in many tissues in a prominent segmentally repeated pattern. Later, expression is ubiquitous but has higher levels in segmentally repeated clusters of cells. Expression is also found in cells of the amnioserosa, in the head region, in posterior spiracles and in tracheal trees.

Its subcellular location is the nucleus. In terms of biological role, plays a role in the regulation of circadian rhythms. Transcriptional repressor which inhibits Clock-mediated transcriptional activation by binding to E boxes in the promoters of Clock target genes and repressing their transcription. E box binding activity is time-dependent with higher binding activity seen in the early morning (zeitgeber time 2) than early evening (zeitgeber time 14) and is dependent on the presence of the circadian protein per. It is likely that per binds to Clock-cycle heterodimers, reducing their affinity for E box binding and allowing cwo to bind instead. Negatively regulates its own expression. In Drosophila melanogaster (Fruit fly), this protein is Transcription factor cwo.